The following is a 297-amino-acid chain: Calponin-1 (297 aa).

One can recognise a Calponin-homology (CH) domain in the interval 28 to 131 (HQREQELREW…STLLALASMA (104 aa)). Calponin-like repeat units lie at residues 164 to 189 (IGLQ…RHLY), 204 to 229 (ISLQ…RQIF), and 243 to 268 (VSLQ…RQVY). The residue at position 170 (Thr-170) is a Phosphothreonine; by ROCK2. Ser-175 carries the phosphoserine; by ROCK2 modification. Phosphothreonine; by ROCK2 is present on residues Thr-180 and Thr-184. Thr-259 is modified (phosphothreonine; by ROCK2).

This sequence belongs to the calponin family.

In terms of biological role, thin filament-associated protein that is implicated in the regulation and modulation of smooth muscle contraction. It is capable of binding to actin, calmodulin and tropomyosin. The interaction of calponin with actin inhibits the actomyosin Mg-ATPase activity. In Bos taurus (Bovine), this protein is Calponin-1 (CNN1).